Here is a 1230-residue protein sequence, read N- to C-terminus: ATP-dependent helicase/nuclease subunit A (1230 aa).

In terms of domain architecture, UvrD-like helicase ATP-binding spans 4 to 480 (RNWTGPQEAA…IDLSHNFRSR (477 aa)). 25–32 (AGAGSGKT) contacts ATP. Residues 517 to 799 (AQLEGSGPPV…RIMSIHQAKG (283 aa)) form the UvrD-like helicase C-terminal domain. Positions 535–554 (TSVGRDTAGTADDEPDRSDE) are disordered. Residues 545 to 554 (ADDEPDRSDE) show a composition bias toward acidic residues.

It belongs to the helicase family. AddA subfamily. In terms of assembly, heterodimer of AddA and AddB/RexB. Requires Mg(2+) as cofactor.

The enzyme catalyses Couples ATP hydrolysis with the unwinding of duplex DNA by translocating in the 3'-5' direction.. The catalysed reaction is ATP + H2O = ADP + phosphate + H(+). In terms of biological role, the heterodimer acts as both an ATP-dependent DNA helicase and an ATP-dependent, dual-direction single-stranded exonuclease. Recognizes the chi site generating a DNA molecule suitable for the initiation of homologous recombination. The AddA nuclease domain is required for chi fragment generation; this subunit has the helicase and 3' -&gt; 5' nuclease activities. The sequence is that of ATP-dependent helicase/nuclease subunit A from Desulforudis audaxviator (strain MP104C).